A 166-amino-acid polypeptide reads, in one-letter code: Orotate phosphoribosyltransferase (166 aa).

Residues R83, K84, H89, and 109–117 (DDVATTGGS) each bind 5-phospho-alpha-D-ribose 1-diphosphate. T113 and R141 together coordinate orotate.

This sequence belongs to the purine/pyrimidine phosphoribosyltransferase family. PyrE subfamily. As to quaternary structure, homodimer. Mg(2+) serves as cofactor.

It carries out the reaction orotidine 5'-phosphate + diphosphate = orotate + 5-phospho-alpha-D-ribose 1-diphosphate. Its pathway is pyrimidine metabolism; UMP biosynthesis via de novo pathway; UMP from orotate: step 1/2. Functionally, catalyzes the transfer of a ribosyl phosphate group from 5-phosphoribose 1-diphosphate to orotate, leading to the formation of orotidine monophosphate (OMP). The sequence is that of Orotate phosphoribosyltransferase from Picrophilus torridus (strain ATCC 700027 / DSM 9790 / JCM 10055 / NBRC 100828 / KAW 2/3).